Here is a 401-residue protein sequence, read N- to C-terminus: Inactive (1R,4R,5S)-(-)-guaia-6,10(14)-diene synthase (401 aa).

The tract at residues 1-20 (MVKFDSGSESEMTNGDELHI) is disordered. Mg(2+) is bound by residues Asp-134 and Glu-139. A DDXXD motif motif is present at residues 134 to 138 (DDQFD). Arg-242 lines the substrate pocket. Residue Ser-292 coordinates Mg(2+). Lys-295 is a substrate binding site. Asp-296 provides a ligand contact to Mg(2+). Residue 375 to 376 (RY) participates in substrate binding.

This sequence belongs to the terpene synthase family. Requires Mg(2+) as cofactor.

The polypeptide is Inactive (1R,4R,5S)-(-)-guaia-6,10(14)-diene synthase (Gibberella fujikuroi (strain CBS 195.34 / IMI 58289 / NRRL A-6831) (Bakanae and foot rot disease fungus)).